Here is a 479-residue protein sequence, read N- to C-terminus: Flap endonuclease 1 (479 aa).

An N-domain region spans residues 1-106; the sequence is MGIKGLTKFI…SELEKRGEKR (106 aa). Asp-34 lines the Mg(2+) pocket. Arg-47 and Arg-72 together coordinate DNA. Asp-88, Glu-160, Glu-162, Asp-181, and Asp-183 together coordinate Mg(2+). The segment at 124–266 is I-domain; sequence EIKKQSGRTV…KTAYNLIKEY (143 aa). Glu-160 contacts DNA. 2 residues coordinate DNA: Gly-244 and Asp-246. A Mg(2+)-binding site is contributed by Asp-246. The tract at residues 349–357 is interaction with PCNA; it reads TQRRLDTFF. Positions 379 to 455 are disordered; sequence AKGKGKKREL…NSDSGNIKNE (77 aa). Positions 403 to 428 are enriched in basic and acidic residues; it reads NIKDEKKNTDKMDELKNKSDENFVKD.

It belongs to the XPG/RAD2 endonuclease family. FEN1 subfamily. In terms of assembly, interacts with PCNA. Three molecules of FEN1 bind to one PCNA trimer with each molecule binding to one PCNA monomer. PCNA stimulates the nuclease activity without altering cleavage specificity. Mg(2+) serves as cofactor. In terms of processing, phosphorylated. Phosphorylation upon DNA damage induces relocalization to the nuclear plasma.

The protein resides in the nucleus. It localises to the nucleolus. Its subcellular location is the nucleoplasm. The protein localises to the mitochondrion. In terms of biological role, structure-specific nuclease with 5'-flap endonuclease and 5'-3' exonuclease activities involved in DNA replication and repair. During DNA replication, cleaves the 5'-overhanging flap structure that is generated by displacement synthesis when DNA polymerase encounters the 5'-end of a downstream Okazaki fragment. It enters the flap from the 5'-end and then tracks to cleave the flap base, leaving a nick for ligation. Also involved in the long patch base excision repair (LP-BER) pathway, by cleaving within the apurinic/apyrimidinic (AP) site-terminated flap. Acts as a genome stabilization factor that prevents flaps from equilibrating into structures that lead to duplications and deletions. Also possesses 5'-3' exonuclease activity on nicked or gapped double-stranded DNA, and exhibits RNase H activity. Also involved in replication and repair of rDNA and in repairing mitochondrial DNA. The chain is Flap endonuclease 1 from Plasmodium chabaudi chabaudi.